Reading from the N-terminus, the 500-residue chain is Protein shisa-6 (500 aa).

Residues 1 to 25 form the signal peptide; that stretch reads MALRRLLLLLLLSLESLDLLPSVHG. At 26-174 the chain is on the extracellular side; the sequence is ARGRAANRTL…NKYDPEKDKT (149 aa). Residues N32 and N59 are each glycosylated (N-linked (GlcNAc...) asparagine). Residues 52 to 73 are disordered; the sequence is ARGGRELNGTARAPGIPEAGSR. Residues 175 to 195 traverse the membrane as a helical segment; the sequence is NFTVYITCGVIAFVIVAGVFA. At 196–500 the chain is on the cytoplasmic side; the sequence is KVSYDKAHRP…YTASKTEVTV (305 aa). The span at 240 to 255 shows a compositional bias: polar residues; sequence TSPKENTPVRSSSKNH. Disordered stretches follow at residues 240–269 and 349–378; these read TSPKENTPVRSSSKNHYTPVRTAKQTPEKP and SQQKPLPRERPRRPIRAMSQDRVLSPDRGL. Residues S391, S397, and S409 each carry the phosphoserine modification. A Phosphothreonine modification is found at T433. Residues 444–470 are disordered; it reads MHSHPSASNNSYATLGQSQTAAKRHAF. Positions 448–464 are enriched in polar residues; the sequence is PSASNNSYATLGQSQTA. T477 carries the post-translational modification Phosphothreonine. The PDZ-binding signature appears at 497-500; the sequence is EVTV.

Belongs to the shisa family. In terms of assembly, component of the postsynaptic hippocampal AMPA-type glutamate receptor (AMPAR) complex, at least composed of pore forming AMPAR subunits GRIA1, GRIA2 and GRIA3 and AMPAR auxiliary proteins SHISA6 and SHISA7. Interacts (via PDZ-binding motif) with DLG4/PSD-95 (via PDZ domain); the interaction is direct. As to expression, expressed in the developing ventral mesencephalon.

Its subcellular location is the membrane. It is found in the postsynaptic density. Its function is as follows. Involved in maintenance of high-frequency synaptic transmission at hippocampal CA3-CA1 synapses. Regulates AMPA-type glutamate receptor (AMPAR) immobilization at postsynaptic density keeping the channels in an activated state in the presence of glutamate and preventing synaptic depression. May play a role in self-renewal and differentiation of spermatogonial stem cells by inhibiting canonical Wnt signaling pathway. The polypeptide is Protein shisa-6 (Homo sapiens (Human)).